A 569-amino-acid chain; its full sequence is Urease subunit alpha (569 aa).

The Ni(2+) site is built by H136, H138, and K219. K219 carries the N6-carboxylysine modification. H221 contributes to the substrate binding site. Ni(2+) is bound by residues H248 and H274. The active-site Proton donor is the H322. D362 serves as a coordination point for Ni(2+).

Belongs to the metallo-dependent hydrolases superfamily. Urease alpha subunit family. As to quaternary structure, heterotrimer of UreA (gamma), UreB (beta) and UreC (alpha) subunits. Three heterotrimers associate to form the active enzyme. Ni cation is required as a cofactor. Carboxylation allows a single lysine to coordinate two nickel ions.

The protein resides in the cytoplasm. The enzyme catalyses urea + 2 H2O + H(+) = hydrogencarbonate + 2 NH4(+). It functions in the pathway nitrogen metabolism; urea degradation; CO(2) and NH(3) from urea (urease route): step 1/1. In Microcystis aeruginosa (strain NIES-843 / IAM M-2473), this protein is Urease subunit alpha.